A 400-amino-acid chain; its full sequence is Protein phosphatase methylesterase 1 (400 aa).

The disordered stretch occupies residues 32 to 70; the sequence is DENDGDALGSLPSFNGQSNRNRKYTGKTGSTTDRISSKE. One can recognise an AB hydrolase-1 domain in the interval 114-365; the sequence is PIFIFHHGAG…DSGHFIQEDS (252 aa). Active-site residues include S205, D233, and H359.

The protein belongs to the AB hydrolase superfamily. In terms of assembly, interacts with and inactivates the phosphatase PP2A-like catalytic subunits PPG1, PPH21, PPH22, PPH3 and SIT4.

It catalyses the reaction [phosphatase 2A protein]-C-terminal L-leucine methyl ester + H2O = [phosphatase 2A protein]-C-terminal L-leucine + methanol + H(+). Demethylates proteins that have been reversibly carboxymethylated. Demethylates the phosphatase PP2A catalytic subunits PPH21 and PPH22. Forms inactive complexes (PP2Ai) with phosphatase PP2A-like catalytic subunits. Involved in the regulation of cell cycle progression at START. This Saccharomyces cerevisiae (strain ATCC 204508 / S288c) (Baker's yeast) protein is Protein phosphatase methylesterase 1 (PPE1).